The chain runs to 858 residues: MSAHAAPSPEALSRRAEFKAAKTEMLERFRHAANVASLMHALSKLTDDALKRVWDECGLPATLALVAVGGYGRGELAPYSDVDILVLLPDAHDAALDARIERFIGMAWDLGLEIGSSVRTVAQCIEEASQDVTVQTSLLEARRIVGSTALFERFTVRYHEALDARAFFTAKVLEMRQRHAKFQDTPYSLEPNVKESPGGLRDLQTILWIARAAGFGSSWRELDTRGLITDREARELRRNEGFLKTLRARLHVIAGRRQDMLVFDLQTQAAESFGYQPTQAKRASEQLMRRYYWAAKAVTQLATILIQNIEAQLFPATSGITRVLSADRFVEKQGMLEIVDDGVFERHPDAILEAFLLYETTRGVKGLSARTLRALYNSREIMNNAWRRDPQNRATFMRILQQPEGITHAFRLMNQTSVLGRYLLNFRRIVGQMQHDLYHVYTVDQHILMVLRNIRRFAVAEHAHEYPFCSQLIGNFERPWVLYVAALFHDIAKGRGGDHSTLGMADARRFCREHGIAGDDAALIVWLVQHHLTMSQVAQKQDTSDPEVIKRFAEVVGNERYLTALYLLTVADIRGTSPKVWNTWKGKLLEDLYRITLAVLGGANPDAHSELKSRQEQALALLRLETVPDDAHRALWDQLDVGFFLRHDAADIAWQTRVLYRHVNAETAIVRARPSPIGDALQVLVYVKDRPDLFAGICAYFDRNGLSVLDARVSTTRHGYALDNFIVTQTERDVRYRDIANLVEQQLATRLAETASLPEPSKGRLSRLSRTFPITPRVDLRADERGQYYILSVSANDRPGLLYSIARVLAEHRIGVHAARINTLGERVEDIFLLAGAGLSDNRLQIQLETELLRAIAV.

Residues 1-324 (MSAHAAPSPE…PATSGITRVL (324 aa)) are uridylyltransferase. A uridylyl-removing region spans residues 325–681 (SADRFVEKQG…ARPSPIGDAL (357 aa)). In terms of domain architecture, HD spans 443–565 (VDQHILMVLR…VGNERYLTAL (123 aa)). 2 ACT domains span residues 682-763 (QVLV…PSKG) and 790-858 (ILSV…AIAV).

Belongs to the GlnD family. It depends on Mg(2+) as a cofactor.

The catalysed reaction is [protein-PII]-L-tyrosine + UTP = [protein-PII]-uridylyl-L-tyrosine + diphosphate. The enzyme catalyses [protein-PII]-uridylyl-L-tyrosine + H2O = [protein-PII]-L-tyrosine + UMP + H(+). Its activity is regulated as follows. Uridylyltransferase (UTase) activity is inhibited by glutamine, while glutamine activates uridylyl-removing (UR) activity. Functionally, modifies, by uridylylation and deuridylylation, the PII regulatory proteins (GlnB and homologs), in response to the nitrogen status of the cell that GlnD senses through the glutamine level. Under low glutamine levels, catalyzes the conversion of the PII proteins and UTP to PII-UMP and PPi, while under higher glutamine levels, GlnD hydrolyzes PII-UMP to PII and UMP (deuridylylation). Thus, controls uridylylation state and activity of the PII proteins, and plays an important role in the regulation of nitrogen assimilation and metabolism. This chain is Bifunctional uridylyltransferase/uridylyl-removing enzyme, found in Burkholderia orbicola (strain AU 1054).